The chain runs to 399 residues: Elongation factor Tu (399 aa).

One can recognise a tr-type G domain in the interval 10 to 209 (KPHVNIGTIG…AVDDYIPTPV (200 aa)). The tract at residues 19–26 (GHVDHGKT) is G1. Residue 19–26 (GHVDHGKT) coordinates GTP. Residue Thr-26 participates in Mg(2+) binding. Residues 62–66 (GITIN) form a G2 region. The tract at residues 83 to 86 (DCPG) is G3. GTP contacts are provided by residues 83–87 (DCPGH) and 138–141 (NKCD). Residues 138 to 141 (NKCD) are G4. Residues 175-177 (SAY) form a G5 region.

The protein belongs to the TRAFAC class translation factor GTPase superfamily. Classic translation factor GTPase family. EF-Tu/EF-1A subfamily. Monomer.

Its subcellular location is the cytoplasm. The enzyme catalyses GTP + H2O = GDP + phosphate + H(+). Its function is as follows. GTP hydrolase that promotes the GTP-dependent binding of aminoacyl-tRNA to the A-site of ribosomes during protein biosynthesis. The protein is Elongation factor Tu of Bifidobacterium longum subsp. infantis (strain ATCC 15697 / DSM 20088 / JCM 1222 / NCTC 11817 / S12).